The primary structure comprises 461 residues: Asparagine--tRNA ligase (461 aa).

It belongs to the class-II aminoacyl-tRNA synthetase family. As to quaternary structure, homodimer.

It localises to the cytoplasm. It catalyses the reaction tRNA(Asn) + L-asparagine + ATP = L-asparaginyl-tRNA(Asn) + AMP + diphosphate + H(+). This chain is Asparagine--tRNA ligase, found in Oleidesulfovibrio alaskensis (strain ATCC BAA-1058 / DSM 17464 / G20) (Desulfovibrio alaskensis).